The chain runs to 563 residues: Arginine--tRNA ligase (563 aa).

The 'HIGH' region motif lies at P120–H130.

Belongs to the class-I aminoacyl-tRNA synthetase family. In terms of assembly, monomer.

Its subcellular location is the cytoplasm. It catalyses the reaction tRNA(Arg) + L-arginine + ATP = L-arginyl-tRNA(Arg) + AMP + diphosphate. The sequence is that of Arginine--tRNA ligase from Clostridium beijerinckii (strain ATCC 51743 / NCIMB 8052) (Clostridium acetobutylicum).